The primary structure comprises 187 residues: Large ribosomal subunit protein uL5 (187 aa).

This sequence belongs to the universal ribosomal protein uL5 family. In terms of assembly, part of the 50S ribosomal subunit; part of the 5S rRNA/L5/L18/L25 subcomplex. Contacts the 5S rRNA and the P site tRNA. Forms a bridge to the 30S subunit in the 70S ribosome.

Its function is as follows. This is one of the proteins that bind and probably mediate the attachment of the 5S RNA into the large ribosomal subunit, where it forms part of the central protuberance. In the 70S ribosome it contacts protein S13 of the 30S subunit (bridge B1b), connecting the 2 subunits; this bridge is implicated in subunit movement. Contacts the P site tRNA; the 5S rRNA and some of its associated proteins might help stabilize positioning of ribosome-bound tRNAs. The protein is Large ribosomal subunit protein uL5 of Mycolicibacterium smegmatis (strain ATCC 700084 / mc(2)155) (Mycobacterium smegmatis).